The primary structure comprises 136 residues: Transmembrane protein 203 (136 aa).

The tract at residues Met-1 to Val-51 is interaction with STING1. A run of 4 helical transmembrane segments spans residues Phe-14 to Ala-34, Phe-50 to Phe-72, Val-81 to Leu-101, and Leu-112 to Ala-132. Residues Pro-52 to Asn-136 form a required for lysosomal localization of the STING-TMEM203 complex region.

In terms of assembly, homodimer. Interacts with ATP2A2 and ITPR3. Interacts with STIM1 and STING1 (via transmembrane domain).

The protein localises to the endoplasmic reticulum membrane. Its subcellular location is the endoplasmic reticulum-Golgi intermediate compartment. The protein resides in the lysosome membrane. Functionally, involved in the regulation of cellular calcium homeotasis. Required for spermatogenesis. Acts as a regulator of STING-mediated inflammatory signaling in macrophages. Forms a complex with STING, promoting the activity of TBK1 kinase and the transcription factor IRF3, leading to activation of type I interferon expression. This chain is Transmembrane protein 203 (Tmem203), found in Mus musculus (Mouse).